Reading from the N-terminus, the 195-residue chain is Ras-related protein rac-2 (195 aa).

A GTP-binding site is contributed by 10-17 (GDGAVGKT). Residues 32–40 (YILTVFDTY) carry the Effector region motif. GTP contacts are provided by residues 57-61 (DTAGQ) and 115-118 (TKAD). Residues 176–195 (GLTPPQTPQTRAKKSNCTVL) form a disordered region. Cys192 is modified (cysteine methyl ester). Cys192 is lipidated: S-geranylgeranyl cysteine. Residues 193 to 195 (TVL) constitute a propeptide, removed in mature form.

It belongs to the small GTPase superfamily. Rho family.

The protein localises to the cell membrane. In terms of biological role, during gonad morphogenesis, plays a role in distal tip cell (DTC)-mediated guidance of gonad elongation. This chain is Ras-related protein rac-2 (rac-2), found in Caenorhabditis elegans.